Consider the following 314-residue polypeptide: Ficolin-2 (314 aa).

Residues 1–17 form the signal peptide; the sequence is MALGSAALFVLTLTVHA. The Collagen-like domain occupies 40–96; sequence GCPGLPGAAGPKGEAGAKGDRGESGLPGIPGKEGPTGPKGNQGEKGIRGEKGDSGPS. The disordered stretch occupies residues 49-101; the sequence is GPKGEAGAKGDRGESGLPGIPGKEGPTGPKGNQGEKGIRGEKGDSGPSQSCAT. In terms of domain architecture, Fibrinogen C-terminal spans 97 to 314; sequence QSCATGPRTC…KVSEMKVRLI (218 aa). Intrachain disulfides connect Cys-99–Cys-127 and Cys-106–Cys-134. Residues Asp-250, Asp-252, Ser-254, and Ser-256 each coordinate Ca(2+). Cysteines 258 and 271 form a disulfide. The N-linked (GlcNAc...) asparagine glycan is linked to Asn-301.

It belongs to the ficolin lectin family. Homotrimer. Interacts with elastin. Interacts with MASP1 and MASP2.

It localises to the secreted. Functionally, may function in innate immunity through activation of the lectin complement pathway. Calcium-dependent and GlcNAc-binding lectin. The chain is Ficolin-2 (Fcn2) from Mus musculus (Mouse).